Here is a 192-residue protein sequence, read N- to C-terminus: Probable protein adenylyltransferase y4lH (192 aa).

The Fido domain maps to 52–190 (LDFAHYRALH…LAPLAAEIRR (139 aa)). Residues 82-83 (KG) and 139-141 (GNG) each bind ATP.

The protein belongs to the fic family.

It carries out the reaction L-tyrosyl-[protein] + ATP = O-(5'-adenylyl)-L-tyrosyl-[protein] + diphosphate. It catalyses the reaction L-threonyl-[protein] + ATP = 3-O-(5'-adenylyl)-L-threonyl-[protein] + diphosphate. Its function is as follows. Probable adenylyltransferase that mediates the addition of adenosine 5'-monophosphate (AMP) to specific residues of target proteins. The protein is Probable protein adenylyltransferase y4lH of Sinorhizobium fredii (strain NBRC 101917 / NGR234).